We begin with the raw amino-acid sequence, 73 residues long: Acyl carrier protein (73 aa).

Residues methionine 1–lysine 73 enclose the Carrier domain. An O-(pantetheine 4'-phosphoryl)serine modification is found at serine 35.

Belongs to the acyl carrier protein (ACP) family. 4'-phosphopantetheine is transferred from CoA to a specific serine of apo-ACP by AcpS. This modification is essential for activity because fatty acids are bound in thioester linkage to the sulfhydryl of the prosthetic group.

The protein resides in the cytoplasm. It participates in lipid metabolism; fatty acid biosynthesis. Functionally, carrier of the growing fatty acid chain in fatty acid biosynthesis. In Lactococcus lactis subsp. lactis (strain IL1403) (Streptococcus lactis), this protein is Acyl carrier protein.